The sequence spans 1405 residues: Sterol 3-beta-glucosyltransferase (1405 aa).

Composition is skewed to basic and acidic residues over residues 1–16 (MRPFLDDAKRRVDRKL) and 95–105 (TGQRPRKESSV). Disordered regions lie at residues 1–27 (MRPFLDDAKRRVDRKLSARRQSLSASR), 83–186 (ARFD…SATP), and 203–230 (DLKASSTERSQSSLNETGAKGPRDASVS). The segment covering 106–115 (RKGTSVSVNT) has biased composition (polar residues). Residues 116-126 (SSLDPSQRSSS) are compositionally biased toward low complexity. Polar residues predominate over residues 206–218 (ASSTERSQSSLNE). The region spanning 246–285 (EKVLVEYACSLLQSMLLQGYMYVTEGHICFYAYLPKKSTV) is the GRAM 1 domain. Residues 285–384 (VAIKSGYLHK…WVKALQKVIF (100 aa)) form the PH domain. 2 disordered regions span residues 461-526 (SQHL…DSSD) and 566-642 (TIYG…SGAP). A compositionally biased stretch (polar residues) spans 483–493 (RWSLTSGTSRA). A compositionally biased stretch (basic and acidic residues) spans 570-589 (LDRRPSGRERRGRRNSDETA). Positions 590–603 (RSPSTRVNVGTGQQ) are enriched in polar residues. Residues 606–624 (ELDRRTDGNTSGREARDTT) are compositionally biased toward basic and acidic residues. Polar residues predominate over residues 626–642 (ESDQYTQDPTKSFSGAP). The GRAM 2 domain occupies 724–790 (DRFRAHFALP…RDIENVEKEK (67 aa)). Serine 911, arginine 912, aspartate 914, alanine 1214, histidine 1216, histidine 1229, glycine 1233, threonine 1234, aspartate 1253, and glutamine 1254 together coordinate UDP-alpha-D-glucose. The disordered stretch occupies residues 1330 to 1367 (SIASSTPFSPTPSAKTAAEQDADDDVEDSEEWTFVGDD). A compositionally biased stretch (low complexity) spans 1332-1348 (ASSTPFSPTPSAKTAAE). Over residues 1349 to 1367 (QDADDDVEDSEEWTFVGDD) the composition is skewed to acidic residues.

It belongs to the glycosyltransferase 28 family.

The protein localises to the cytoplasm. Its subcellular location is the preautophagosomal structure membrane. The catalysed reaction is a sterol + UDP-alpha-D-glucose = a sterol 3-beta-D-glucoside + UDP + H(+). It carries out the reaction ergosterol + UDP-alpha-D-glucose = ergosteryl 3-beta-D-glucoside + UDP + H(+). Sterol glycosyltransferase responsible for the glycosylation of ergosterol to form ergosterol-glucoside. The chain is Sterol 3-beta-glucosyltransferase from Aspergillus fumigatus (strain ATCC MYA-4609 / CBS 101355 / FGSC A1100 / Af293) (Neosartorya fumigata).